The chain runs to 432 residues: Gamma-glutamyl phosphate reductase (432 aa).

Belongs to the gamma-glutamyl phosphate reductase family.

Its subcellular location is the cytoplasm. It carries out the reaction L-glutamate 5-semialdehyde + phosphate + NADP(+) = L-glutamyl 5-phosphate + NADPH + H(+). It participates in amino-acid biosynthesis; L-proline biosynthesis; L-glutamate 5-semialdehyde from L-glutamate: step 2/2. Functionally, catalyzes the NADPH-dependent reduction of L-glutamate 5-phosphate into L-glutamate 5-semialdehyde and phosphate. The product spontaneously undergoes cyclization to form 1-pyrroline-5-carboxylate. In Corynebacterium melassecola, this protein is Gamma-glutamyl phosphate reductase.